Here is a 166-residue protein sequence, read N- to C-terminus: Crossover junction endodeoxyribonuclease RuvC (166 aa).

Active-site residues include Asp-11, Glu-70, and Asp-142. Positions 11, 70, and 142 each coordinate Mg(2+).

The protein belongs to the RuvC family. As to quaternary structure, homodimer which binds Holliday junction (HJ) DNA. The HJ becomes 2-fold symmetrical on binding to RuvC with unstacked arms; it has a different conformation from HJ DNA in complex with RuvA. In the full resolvosome a probable DNA-RuvA(4)-RuvB(12)-RuvC(2) complex forms which resolves the HJ. It depends on Mg(2+) as a cofactor.

The protein resides in the cytoplasm. It catalyses the reaction Endonucleolytic cleavage at a junction such as a reciprocal single-stranded crossover between two homologous DNA duplexes (Holliday junction).. Functionally, the RuvA-RuvB-RuvC complex processes Holliday junction (HJ) DNA during genetic recombination and DNA repair. Endonuclease that resolves HJ intermediates. Cleaves cruciform DNA by making single-stranded nicks across the HJ at symmetrical positions within the homologous arms, yielding a 5'-phosphate and a 3'-hydroxyl group; requires a central core of homology in the junction. The consensus cleavage sequence is 5'-(A/T)TT(C/G)-3'. Cleavage occurs on the 3'-side of the TT dinucleotide at the point of strand exchange. HJ branch migration catalyzed by RuvA-RuvB allows RuvC to scan DNA until it finds its consensus sequence, where it cleaves and resolves the cruciform DNA. The sequence is that of Crossover junction endodeoxyribonuclease RuvC from Nitratidesulfovibrio vulgaris (strain DP4) (Desulfovibrio vulgaris).